The primary structure comprises 276 residues: NADPH-dependent 7-cyano-7-deazaguanine reductase (276 aa).

83 to 85 (IES) lines the substrate pocket. 85-86 (SK) provides a ligand contact to NADPH. C184 functions as the Thioimide intermediate in the catalytic mechanism. D191 functions as the Proton donor in the catalytic mechanism. Residue 223-224 (HE) participates in substrate binding. 252 to 253 (RG) is an NADPH binding site.

It belongs to the GTP cyclohydrolase I family. QueF type 2 subfamily. In terms of assembly, homodimer.

The protein resides in the cytoplasm. It carries out the reaction 7-aminomethyl-7-carbaguanine + 2 NADP(+) = 7-cyano-7-deazaguanine + 2 NADPH + 3 H(+). It participates in tRNA modification; tRNA-queuosine biosynthesis. Functionally, catalyzes the NADPH-dependent reduction of 7-cyano-7-deazaguanine (preQ0) to 7-aminomethyl-7-deazaguanine (preQ1). This chain is NADPH-dependent 7-cyano-7-deazaguanine reductase, found in Pseudomonas syringae pv. syringae (strain B728a).